A 163-amino-acid polypeptide reads, in one-letter code: NADH-quinone oxidoreductase subunit B (163 aa).

[4Fe-4S] cluster contacts are provided by Cys-32, Cys-33, Cys-98, and Cys-127.

It belongs to the complex I 20 kDa subunit family. In terms of assembly, NDH-1 is composed of 14 different subunits. Subunits NuoB, C, D, E, F, and G constitute the peripheral sector of the complex. It depends on [4Fe-4S] cluster as a cofactor.

It localises to the cell inner membrane. The enzyme catalyses a quinone + NADH + 5 H(+)(in) = a quinol + NAD(+) + 4 H(+)(out). Functionally, NDH-1 shuttles electrons from NADH, via FMN and iron-sulfur (Fe-S) centers, to quinones in the respiratory chain. Couples the redox reaction to proton translocation (for every two electrons transferred, four hydrogen ions are translocated across the cytoplasmic membrane), and thus conserves the redox energy in a proton gradient. The polypeptide is NADH-quinone oxidoreductase subunit B (Pelobacter propionicus (strain DSM 2379 / NBRC 103807 / OttBd1)).